The primary structure comprises 413 residues: Mitochondrial inner membrane magnesium transporter MFM1 (413 aa).

The N-terminal 35 residues, 1 to 35, are a transit peptide targeting the mitochondrion; the sequence is MRAFPRVLPFRHQRSYNNILLRTVRLFGSSLSSFD. A glycan (N-linked (GlcNAc...) asparagine) is linked at Asn-202. A helical transmembrane segment spans residues 329 to 349; the sequence is LMLLGIRYAIGMLSLGGALFL. The short motif at 353 to 356 is the YGMN element; it reads YGMN. Residues 367 to 387 form a helical membrane-spanning segment; it reads AYLTVTILGLISTVWLYAKGI.

Belongs to the CorA metal ion transporter (MIT) (TC 1.A.35) family. Forms homooligomers. Interacts with MRS2. In terms of processing, N-glycosylated. Glycosylation is important for correct localization of the protein.

It is found in the mitochondrion inner membrane. In terms of biological role, mitochondrial inner membrane magnesium transporter required for mitochondrial magnesium homeostasis. Modulates the conductance of the MRS2 channel. Involved in the splicing of mRNA group II introns in mitochondria by affecting mitochondrial magnesium concentrations, which are critical for group II intron splicing. This Saccharomyces cerevisiae (strain ATCC 204508 / S288c) (Baker's yeast) protein is Mitochondrial inner membrane magnesium transporter MFM1 (MFM1).